Here is a 542-residue protein sequence, read N- to C-terminus: Chloride channel CLIC-like protein 1 (542 aa).

The first 18 residues, 1-18 (MLYSLLLCECLWLITAYA), serve as a signal peptide directing secretion. At 19–184 (HDDEWIDPTD…EEFFGVDPYN (166 aa)) the chain is on the lumenal side. Residues 185 to 205 (VFMVLLCLLCIVALVATELWT) form a helical membrane-spanning segment. The Cytoplasmic segment spans residues 206 to 216 (YVRWYTQLKRV). The helical transmembrane segment at 217-237 (FFISFLISLGWNWMYLYKLAF) threads the bilayer. At 238 to 329 (AQHQAEVAKM…GEFIKALMKE (92 aa)) the chain is on the lumenal side. A helical transmembrane segment spans residues 330 to 350 (IPVLLHIPVLIIMALAVLSFC). Residues 351 to 542 (YGAGKSVNML…PASTAVEVCG (192 aa)) are Cytoplasmic-facing. Positions 369–394 (EAPQALQAGERRRQQKIDYRPHGGAG) are disordered. A compositionally biased stretch (basic and acidic residues) spans 377–389 (GERRRQQKIDYRP). 2 positions are modified to phosphoserine: Ser-438 and Ser-464. Residues 452–542 (AREHPKVVPG…PASTAVEVCG (91 aa)) are disordered. The segment covering 480-491 (ESTPTESSTESS) has biased composition (low complexity). Thr-482 bears the Phosphothreonine mark. Position 532 is a phosphoserine (Ser-532).

It belongs to the chloride channel MCLC family. As to quaternary structure, homomultimers. Interacts with mitochondrial protein PIGBOS1 (via C-terminus); the interaction occurs at the mitochondria-associated endoplasmic reticulum (ER) membrane, a zone of contact between the ER and mitochondrial membranes, but does not appear to play a role in ER-mitochondria tethering and is not affected by ER stress. Interacts with CALR.

It localises to the endoplasmic reticulum membrane. It carries out the reaction chloride(in) = chloride(out). It catalyses the reaction bromide(in) = bromide(out). The enzyme catalyses nitrate(in) = nitrate(out). The catalysed reaction is fluoride(in) = fluoride(out). Anion-selective channel with Ca(2+)-dependent and voltage-independent gating. Permeable to small monovalent anions with selectivity for bromide &gt; chloride &gt; nitrate &gt; fluoride. Operates in the endoplasmic reticulum (ER) membrane where it mediates chloride efflux to compensate for the loss of positive charges from the ER lumen upon Ca(2+) release. Contributes to the maintenance of ER Ca(2+) pools and activation of unfolded protein response to prevent accumulation of misfolded proteins in the ER lumen. Particularly involved in ER homeostasis mechanisms underlying motor neurons and retinal photoreceptors survival. The chain is Chloride channel CLIC-like protein 1 (CLCC1) from Bos taurus (Bovine).